A 152-amino-acid polypeptide reads, in one-letter code: Large ribosomal subunit protein bL9 (152 aa).

The protein belongs to the bacterial ribosomal protein bL9 family.

Binds to the 23S rRNA. In Synechocystis sp. (strain ATCC 27184 / PCC 6803 / Kazusa), this protein is Large ribosomal subunit protein bL9.